A 445-amino-acid polypeptide reads, in one-letter code: Probable D-serine dehydratase (445 aa).

Lys111 is modified (N6-(pyridoxal phosphate)lysine).

It belongs to the serine/threonine dehydratase family. DsdA subfamily. Pyridoxal 5'-phosphate is required as a cofactor.

The enzyme catalyses D-serine = pyruvate + NH4(+). The chain is Probable D-serine dehydratase from Burkholderia pseudomallei (strain K96243).